The sequence spans 221 residues: Hydrogenase expression/formation protein HupD (221 aa).

Ni(2+) contacts are provided by E20, D66, and H97.

It belongs to the peptidase A31 family.

In terms of biological role, not known. Could be involved in the processing of hydrogenase. This Thiocapsa roseopersicina protein is Hydrogenase expression/formation protein HupD (hupD).